Here is a 95-residue protein sequence, read N- to C-terminus: PqqA binding protein (95 aa).

It belongs to the PqqD family. As to quaternary structure, monomer. Interacts with PqqE.

It functions in the pathway cofactor biosynthesis; pyrroloquinoline quinone biosynthesis. Functions as a PqqA binding protein and presents PqqA to PqqE, in the pyrroloquinoline quinone (PQQ) biosynthetic pathway. The sequence is that of PqqA binding protein from Rahnella aquatilis.